Consider the following 161-residue polypeptide: Cyclic pyranopterin monophosphate synthase (161 aa).

Residues 75–77 (LCH) and 113–114 (ME) each bind substrate. Aspartate 128 is a catalytic residue.

Belongs to the MoaC family. In terms of assembly, homohexamer; trimer of dimers.

It carries out the reaction (8S)-3',8-cyclo-7,8-dihydroguanosine 5'-triphosphate = cyclic pyranopterin phosphate + diphosphate. It participates in cofactor biosynthesis; molybdopterin biosynthesis. Its function is as follows. Catalyzes the conversion of (8S)-3',8-cyclo-7,8-dihydroguanosine 5'-triphosphate to cyclic pyranopterin monophosphate (cPMP). In Salmonella heidelberg (strain SL476), this protein is Cyclic pyranopterin monophosphate synthase.